Reading from the N-terminus, the 139-residue chain is Cuticle protein 76 (139 aa).

Repeat copies occupy residues 7–10, 68–71, 75–78, 93–95, 105–108, and 121–124.

Component of the cuticle of migratory locust which contains more than 100 different structural proteins. This Locusta migratoria (Migratory locust) protein is Cuticle protein 76.